The chain runs to 147 residues: Large ribosomal subunit protein uL15 (147 aa).

The tract at residues 1-46 (MSIRLENLSYTPGARKEKHRKGRGHAAGKGKQAGRGQSGQKKRSTV) is disordered. Residues 16 to 28 (KEKHRKGRGHAAG) show a composition bias toward basic residues.

The protein belongs to the universal ribosomal protein uL15 family. As to quaternary structure, part of the 50S ribosomal subunit.

Functionally, binds to the 23S rRNA. The chain is Large ribosomal subunit protein uL15 from Mesomycoplasma hyopneumoniae (strain 7448) (Mycoplasma hyopneumoniae).